We begin with the raw amino-acid sequence, 251 residues long: Uridylate kinase (251 aa).

Position 11 to 14 (11 to 14) interacts with ATP; it reads KLSG. An involved in allosteric activation by GTP region spans residues 19–24; that stretch reads GNQGFG. G53 is a UMP binding site. Residues G54 and R58 each coordinate ATP. UMP-binding positions include D73 and 134-141; that span reads TGNPYFTT. Positions 161, 167, and 170 each coordinate ATP.

The protein belongs to the UMP kinase family. In terms of assembly, homohexamer.

It is found in the cytoplasm. The catalysed reaction is UMP + ATP = UDP + ADP. Its pathway is pyrimidine metabolism; CTP biosynthesis via de novo pathway; UDP from UMP (UMPK route): step 1/1. Its activity is regulated as follows. Allosterically activated by GTP. Inhibited by UTP. In terms of biological role, catalyzes the reversible phosphorylation of UMP to UDP. This is Uridylate kinase from Protochlamydia amoebophila (strain UWE25).